Consider the following 496-residue polypeptide: Chromosomal replication initiator protein DnaA (496 aa).

The segment at 1–76 (MKMDSAVSEE…TELWQEENPQ (76 aa)) is domain I, interacts with DnaA modulators. The interval 76–150 (QILKVEVVVR…AAATDAVLGS (75 aa)) is domain II. The domain III, AAA+ region stretch occupies residues 151-373 (PLDPRYTFDT…GAFNQLLFRQ (223 aa)). ATP is bound by residues glycine 197, glycine 199, lysine 200, and threonine 201. Positions 374 to 496 (SFEPNISIDR…LKRLINDQAA (123 aa)) are domain IV, binds dsDNA.

This sequence belongs to the DnaA family. In terms of assembly, oligomerizes as a right-handed, spiral filament on DNA at oriC.

It is found in the cytoplasm. In terms of biological role, plays an essential role in the initiation and regulation of chromosomal replication. ATP-DnaA binds to the origin of replication (oriC) to initiate formation of the DNA replication initiation complex once per cell cycle. Binds the DnaA box (a 9 base pair repeat at the origin) and separates the double-stranded (ds)DNA. Forms a right-handed helical filament on oriC DNA; dsDNA binds to the exterior of the filament while single-stranded (ss)DNA is stabiized in the filament's interior. The ATP-DnaA-oriC complex binds and stabilizes one strand of the AT-rich DNA unwinding element (DUE), permitting loading of DNA polymerase. After initiation quickly degrades to an ADP-DnaA complex that is not apt for DNA replication. Binds acidic phospholipids. The polypeptide is Chromosomal replication initiator protein DnaA (Brucella suis biovar 1 (strain 1330)).